A 1148-amino-acid chain; its full sequence is Putative transcription factor SEF1 (1148 aa).

The disordered stretch occupies residues 1–51; sequence MVKDNRDSDQDQDFSSAHMKRQPEQQQLQQHQFPSKKQRISHHDDSHQINH. Phosphoserine is present on serine 8. Positions 57 to 87 form a DNA-binding region, zn(2)-C6 fungal-type; that stretch reads CTHCRQHKIKCDASQNFPHPCSRCEKIGLHC. Positions 148–180 are disordered; that stretch reads PTPGTIIPNPDSSPSSGSPTSSAAQRDSKVSVQ. Over residues 150–169 the composition is skewed to low complexity; the sequence is PGTIIPNPDSSPSSGSPTSS. Phosphoserine is present on serine 263. Residues 524–550 are disordered; that stretch reads EESEEDNNDSIDNNNNDKRNKKDEPHV. Over residues 538–550 the composition is skewed to basic and acidic residues; that stretch reads NNDKRNKKDEPHV. Serine 806 bears the Phosphoserine mark. The span at 1029–1050 shows a compositional bias: polar residues; that stretch reads RSQSSMSHSRTPIASKSNNMTD. Residues 1029-1063 are disordered; that stretch reads RSQSSMSHSRTPIASKSNNMTDLHSVVSDPGSSKS.

Its subcellular location is the nucleus. In terms of biological role, putative transcription factor that seems to be involved in the sporulation process. Suppresses the lethal phenotype of RPM2 deletion. This is Putative transcription factor SEF1 (SEF1) from Saccharomyces cerevisiae (strain ATCC 204508 / S288c) (Baker's yeast).